The following is a 445-amino-acid chain: ATP-dependent protease ATPase subunit HslU (445 aa).

Residues I17, 59–64 (GVGKTE), D254, E319, and R391 each bind ATP.

The protein belongs to the ClpX chaperone family. HslU subfamily. As to quaternary structure, a double ring-shaped homohexamer of HslV is capped on each side by a ring-shaped HslU homohexamer. The assembly of the HslU/HslV complex is dependent on binding of ATP.

It localises to the cytoplasm. ATPase subunit of a proteasome-like degradation complex; this subunit has chaperone activity. The binding of ATP and its subsequent hydrolysis by HslU are essential for unfolding of protein substrates subsequently hydrolyzed by HslV. HslU recognizes the N-terminal part of its protein substrates and unfolds these before they are guided to HslV for hydrolysis. This chain is ATP-dependent protease ATPase subunit HslU, found in Pseudomonas fluorescens (strain Pf0-1).